Reading from the N-terminus, the 555-residue chain is Solute carrier family 2, facilitated glucose transporter member 10 (555 aa).

The Cytoplasmic segment spans residues 1-15; that stretch reads MGLSSPTLILAATVS. The chain crosses the membrane as a helical span at residues 16–36; that stretch reads LLGGIVFGYELGIISGALLVL. Topologically, residues 37–48 are extracellular; the sequence is KTVYQLTCFEQE. A helical transmembrane segment spans residues 49–69; that stretch reads ALVSAVLFGALLASLIGGIII. Residues 70-82 lie on the Cytoplasmic side of the membrane; that stretch reads DRWGRRTAILASN. The helical transmembrane segment at 83-103 threads the bilayer; the sequence is LVVLAGSIILIATSTFWWLIV. Residues 104-105 lie on the Extracellular side of the membrane; the sequence is GR. A helical membrane pass occupies residues 106–126; that stretch reads VTIGFAISISSMACCIYVSEI. Topologically, residues 127–132 are cytoplasmic; that stretch reads VRPHQR. Residues 133-153 form a helical membrane-spanning segment; sequence GMLVSLYETGITVGILISYAM. Residues 154–165 lie on the Extracellular side of the membrane; it reads NYFLSGVNESWK. Residue Asn-161 is glycosylated (N-linked (GlcNAc...) asparagine). A helical membrane pass occupies residues 166 to 186; sequence YMFGLAIVPAAFQFISILFLP. Residues 187 to 240 are Cytoplasmic-facing; it reads SKPHKLNFWEQDTDDGFIELEETGEAGEFKPDTYDRQYTFLDLFRSKDNMRTRT. Residues 241–261 traverse the membrane as a helical segment; it reads LLGLGLVLFQQFTGQPNVLYY. 250 to 251 contacts D-glucose; it reads QQ. At 262-277 the chain is on the extracellular side; it reads ASTIFQSVGFQSNSSA. Asn-274 carries an N-linked (GlcNAc...) asparagine glycan. Residues 278-298 form a helical membrane-spanning segment; sequence VLASVGLGVVKVASTLIAICF. Residues 299-305 lie on the Cytoplasmic side of the membrane; that stretch reads ADKAGRR. Residues 306–326 form a helical membrane-spanning segment; the sequence is ILLLAGCIVMTIAITGIGIVS. Over 327–415 the chain is Extracellular; that stretch reads FTVKMDSHRD…ASPELPSNYT (89 aa). N-linked (GlcNAc...) asparagine glycans are attached at residues Asn-344, Asn-351, Asn-400, and Asn-413. Residues 416–436 traverse the membrane as a helical segment; sequence ILNWITLLSMMAFVSAFSIGF. The Cytoplasmic segment spans residues 437–464; the sequence is GPMTWIVLSEIYPADIRGRAFAFCNSFN. Trp-441 contributes to the D-glucose binding site. Residues 465 to 483 traverse the membrane as a helical segment; sequence WAANLLITLTFLDVIASIG. Residues 484–485 lie on the Extracellular side of the membrane; sequence LS. The helical transmembrane segment at 486 to 506 threads the bilayer; the sequence is WTFLLYGVVGLLAIAFIYFFI. The Cytoplasmic segment spans residues 507–555; sequence PETKGQSLEEIDKQFSTKRILQKRETSKGVGKRPSSGPPYQRIGKASPS. The segment at 528–555 is disordered; that stretch reads QKRETSKGVGKRPSSGPPYQRIGKASPS.

Belongs to the major facilitator superfamily. Sugar transporter (TC 2.A.1.1) family. Glucose transporter subfamily.

It is found in the endomembrane system. It localises to the cytoplasm. The protein localises to the perinuclear region. The catalysed reaction is D-glucose(out) = D-glucose(in). Functionally, facilitative glucose transporter required for the development of the cardiovascular system. This is Solute carrier family 2, facilitated glucose transporter member 10 from Xenopus tropicalis (Western clawed frog).